We begin with the raw amino-acid sequence, 49 residues long: Large ribosomal subunit protein bL33B (49 aa).

This sequence belongs to the bacterial ribosomal protein bL33 family.

In Bacillus licheniformis (strain ATCC 14580 / DSM 13 / JCM 2505 / CCUG 7422 / NBRC 12200 / NCIMB 9375 / NCTC 10341 / NRRL NRS-1264 / Gibson 46), this protein is Large ribosomal subunit protein bL33B.